The primary structure comprises 388 residues: DNA replication and repair protein RecF (388 aa).

An ATP-binding site is contributed by 30 to 37; it reads GNNAQGKS.

The protein belongs to the RecF family.

The protein resides in the cytoplasm. Functionally, the RecF protein is involved in DNA metabolism; it is required for DNA replication and normal SOS inducibility. RecF binds preferentially to single-stranded, linear DNA. It also seems to bind ATP. The protein is DNA replication and repair protein RecF of Picosynechococcus sp. (strain ATCC 27264 / PCC 7002 / PR-6) (Agmenellum quadruplicatum).